Reading from the N-terminus, the 349-residue chain is Phosphoribosylformylglycinamidine cyclo-ligase (349 aa).

The protein belongs to the AIR synthase family.

It localises to the cytoplasm. The catalysed reaction is 2-formamido-N(1)-(5-O-phospho-beta-D-ribosyl)acetamidine + ATP = 5-amino-1-(5-phospho-beta-D-ribosyl)imidazole + ADP + phosphate + H(+). It functions in the pathway purine metabolism; IMP biosynthesis via de novo pathway; 5-amino-1-(5-phospho-D-ribosyl)imidazole from N(2)-formyl-N(1)-(5-phospho-D-ribosyl)glycinamide: step 2/2. In Methanococcus maripaludis (strain DSM 14266 / JCM 13030 / NBRC 101832 / S2 / LL), this protein is Phosphoribosylformylglycinamidine cyclo-ligase.